The sequence spans 201 residues: Outer-membrane lipoprotein carrier protein (201 aa).

The N-terminal stretch at 1 to 21 is a signal peptide; it reads MKKVLLTVCAIALFGSQAAWA.

This sequence belongs to the LolA family. In terms of assembly, monomer.

It localises to the periplasm. Participates in the translocation of lipoproteins from the inner membrane to the outer membrane. Only forms a complex with a lipoprotein if the residue after the N-terminal Cys is not an aspartate (The Asp acts as a targeting signal to indicate that the lipoprotein should stay in the inner membrane). The protein is Outer-membrane lipoprotein carrier protein of Proteus mirabilis (strain HI4320).